The sequence spans 603 residues: Elongation factor 4 (603 aa).

Residues 7–191 (SNIRNFSIVA…AIVTRLPPPK (185 aa)) enclose the tr-type G domain. GTP contacts are provided by residues 19 to 24 (DHGKST) and 138 to 141 (NKVD).

This sequence belongs to the TRAFAC class translation factor GTPase superfamily. Classic translation factor GTPase family. LepA subfamily.

The protein localises to the cell inner membrane. It carries out the reaction GTP + H2O = GDP + phosphate + H(+). Functionally, required for accurate and efficient protein synthesis under certain stress conditions. May act as a fidelity factor of the translation reaction, by catalyzing a one-codon backward translocation of tRNAs on improperly translocated ribosomes. Back-translocation proceeds from a post-translocation (POST) complex to a pre-translocation (PRE) complex, thus giving elongation factor G a second chance to translocate the tRNAs correctly. Binds to ribosomes in a GTP-dependent manner. The protein is Elongation factor 4 of Bradyrhizobium diazoefficiens (strain JCM 10833 / BCRC 13528 / IAM 13628 / NBRC 14792 / USDA 110).